Here is a 438-residue protein sequence, read N- to C-terminus: Tol-Pal system protein TolB (438 aa).

Positions 1 to 35 (MITMKNILKLRATGLLLLLLLMISVLGNGIGQAMA) are cleaved as a signal peptide.

It belongs to the TolB family. The Tol-Pal system is composed of five core proteins: the inner membrane proteins TolA, TolQ and TolR, the periplasmic protein TolB and the outer membrane protein Pal. They form a network linking the inner and outer membranes and the peptidoglycan layer.

The protein resides in the periplasm. Part of the Tol-Pal system, which plays a role in outer membrane invagination during cell division and is important for maintaining outer membrane integrity. This chain is Tol-Pal system protein TolB, found in Desulfotalea psychrophila (strain LSv54 / DSM 12343).